Consider the following 308-residue polypeptide: tRNA dimethylallyltransferase (308 aa).

Glycine 14–serine 21 contributes to the ATP binding site. Residue threonine 16–serine 21 coordinates substrate. The tract at residues aspartate 39 to glutamine 42 is interaction with substrate tRNA.

This sequence belongs to the IPP transferase family. As to quaternary structure, monomer. Requires Mg(2+) as cofactor.

It catalyses the reaction adenosine(37) in tRNA + dimethylallyl diphosphate = N(6)-dimethylallyladenosine(37) in tRNA + diphosphate. Catalyzes the transfer of a dimethylallyl group onto the adenine at position 37 in tRNAs that read codons beginning with uridine, leading to the formation of N6-(dimethylallyl)adenosine (i(6)A). This is tRNA dimethylallyltransferase from Bradyrhizobium sp. (strain ORS 278).